The chain runs to 145 residues: Transcriptional regulator MraZ (145 aa).

SpoVT-AbrB domains follow at residues 5-50 and 81-124; these read TFNH…ALPQ and AHEV…DRAA.

This sequence belongs to the MraZ family. Forms oligomers.

It is found in the cytoplasm. Its subcellular location is the nucleoid. This Anaeromyxobacter dehalogenans (strain 2CP-1 / ATCC BAA-258) protein is Transcriptional regulator MraZ.